Here is a 132-residue protein sequence, read N- to C-terminus: DNA-directed RNA polymerase subunit Rpo8 (132 aa).

This sequence belongs to the archaeal Rpo8 RNA polymerase subunit family. Part of the 13-subunit RNA polymerase complex.

Its subcellular location is the cytoplasm. The catalysed reaction is RNA(n) + a ribonucleoside 5'-triphosphate = RNA(n+1) + diphosphate. DNA-dependent RNA polymerase (RNAP) catalyzes the transcription of DNA into RNA using the four ribonucleoside triphosphates as substrates. The chain is DNA-directed RNA polymerase subunit Rpo8 from Saccharolobus solfataricus (strain ATCC 35092 / DSM 1617 / JCM 11322 / P2) (Sulfolobus solfataricus).